A 156-amino-acid polypeptide reads, in one-letter code: ATP synthase subunit b (156 aa).

The chain crosses the membrane as a helical span at residues 11 to 31; it reads LIAFALFVWFCMKFVWPPIIN.

Belongs to the ATPase B chain family. As to quaternary structure, F-type ATPases have 2 components, F(1) - the catalytic core - and F(0) - the membrane proton channel. F(1) has five subunits: alpha(3), beta(3), gamma(1), delta(1), epsilon(1). F(0) has three main subunits: a(1), b(2) and c(10-14). The alpha and beta chains form an alternating ring which encloses part of the gamma chain. F(1) is attached to F(0) by a central stalk formed by the gamma and epsilon chains, while a peripheral stalk is formed by the delta and b chains.

It is found in the cell inner membrane. In terms of biological role, f(1)F(0) ATP synthase produces ATP from ADP in the presence of a proton or sodium gradient. F-type ATPases consist of two structural domains, F(1) containing the extramembraneous catalytic core and F(0) containing the membrane proton channel, linked together by a central stalk and a peripheral stalk. During catalysis, ATP synthesis in the catalytic domain of F(1) is coupled via a rotary mechanism of the central stalk subunits to proton translocation. Functionally, component of the F(0) channel, it forms part of the peripheral stalk, linking F(1) to F(0). In Haemophilus influenzae (strain PittGG), this protein is ATP synthase subunit b.